A 301-amino-acid chain; its full sequence is Large ribosomal subunit protein uL4 (301 aa).

A large ribosomal subunit protein uL4 region spans residues 1–223; sequence MNETKTIDVL…TQALSAQPEV (223 aa). Positions 49–105 are disordered; the sequence is QGTHATKTRGQVSGGGKKPWRQKGTGRARQGSTRAPQWVGGGTVHGPQPRSYAQRTP. Positions 224 to 301 are unknown; sequence PETNVADQHP…KSDSEKEDAK (78 aa).

Belongs to the universal ribosomal protein uL4 family. As to quaternary structure, part of the 50S ribosomal subunit.

One of the primary rRNA binding proteins, this protein initially binds near the 5'-end of the 23S rRNA. It is important during the early stages of 50S assembly. It makes multiple contacts with different domains of the 23S rRNA in the assembled 50S subunit and ribosome. Its function is as follows. Forms part of the polypeptide exit tunnel. This Cutibacterium acnes (strain DSM 16379 / KPA171202) (Propionibacterium acnes) protein is Large ribosomal subunit protein uL4.